Reading from the N-terminus, the 752-residue chain is Cytosolic phospholipase A2 (752 aa).

The phospholipid binding stretch occupies residues 1–178; sequence MSFIDPYQHI…MKKLLGPKKS (178 aa). At Ser2 the chain carries Phosphoserine. The C2 domain occupies 6 to 122; sequence PYQHIIVEHQ…KVGEKKEVPF (117 aa). Ca(2+)-binding residues include Asp40, Thr41, Asp43, Asn65, Asp93, Ala94, and Asn95. One can recognise a PLA2c domain in the interval 140–740; it reads SCPDLRFSMA…SNVEARKFFN (601 aa). Ser228 (nucleophile) is an active-site residue. At Thr268 the chain carries Phosphothreonine. The tract at residues 427 to 457 is disordered; it reads KHIVSNDSSDSDDEAQGPKGTENEDAEREYQ. Residues Ser434, Ser435, and Ser437 each carry the phosphoserine modification. Ser505 carries the phosphoserine; by MAPK modification. A phosphoserine mark is found at Ser511 and Ser515. A Glycyl lysine isopeptide (Lys-Gly) (interchain with G-Cter in SUMO2) cross-link involves residue Lys541. The active-site Proton acceptor is the Asp549. A Glycyl lysine isopeptide (Lys-Gly) (interchain with G-Cter in SUMO2) cross-link involves residue Lys606. A phosphoserine mark is found at Ser727 and Ser729.

In terms of assembly, interacts with KAT5. Phosphorylated at both Ser-505 and Ser-727 in response to mitogenic stimuli. In terms of tissue distribution, in brain tissue, expressed in low levels in olfactory mitral and granule cells, in hippocampal pyramidal cells and in dentate and cerebellar granule cells.

The protein localises to the cytoplasm. The protein resides in the golgi apparatus membrane. Its subcellular location is the nucleus envelope. It carries out the reaction a 1,2-diacyl-sn-glycero-3-phosphocholine + H2O = a 1-acyl-sn-glycero-3-phosphocholine + a fatty acid + H(+). The catalysed reaction is a 1-O-alkyl-2-acyl-sn-glycero-3-phosphocholine + H2O = a 1-O-alkyl-sn-glycero-3-phosphocholine + a fatty acid + H(+). The enzyme catalyses a 1-acyl-sn-glycero-3-phosphocholine + H2O = sn-glycerol 3-phosphocholine + a fatty acid + H(+). It catalyses the reaction 1-hexadecanoyl-2-(5Z,8Z,11Z,14Z-eicosatetraenoyl)-sn-glycero-3-phosphocholine + H2O = 1-hexadecanoyl-sn-glycero-3-phosphocholine + (5Z,8Z,11Z,14Z)-eicosatetraenoate + H(+). It carries out the reaction 1,2-di-(5Z,8Z,11Z,14Z-eicosatetraenoyl)-sn-glycero-3-phosphocholine + H2O = 1-(5Z,8Z,11Z,14Z-eicosatetraenoyl)-sn-glycero-3-phosphocholine + (5Z,8Z,11Z,14Z)-eicosatetraenoate + H(+). The catalysed reaction is 1-octadecanoyl-2-(5Z,8Z,11Z,14Z-eicosatetraenoyl)-sn-glycero-3-phosphocholine + H2O = 1-octadecanoyl-sn-glycero-3-phosphocholine + (5Z,8Z,11Z,14Z)-eicosatetraenoate + H(+). The enzyme catalyses 1-hexadecanoyl-2-(9Z,12Z-octadecadienoyl)-sn-glycero-3-phosphocholine + H2O = (9Z,12Z)-octadecadienoate + 1-hexadecanoyl-sn-glycero-3-phosphocholine + H(+). It catalyses the reaction 1-octadecanoyl-2-(9Z,12Z,15Z-octadecatrienoyl)-sn-glycero-3-phosphocholine + H2O = (9Z,12Z,15Z)-octadecatrienoate + 1-octadecanoyl-sn-glycero-3-phosphocholine + H(+). It carries out the reaction 1-(5Z,8Z,11Z,14Z-eicosatetraenoyl)-2-hexadecanoyl-sn-glycero-3-phosphocholine + H2O = 1-(5Z,8Z,11Z,14Z-eicosatetraenoyl)-sn-glycero-3-phosphocholine + hexadecanoate + H(+). The catalysed reaction is 1-O-hexadecyl-2-(5Z,8Z,11Z,14Z)-eicosatetraenoyl-sn-glycero-3-phosphocholine + H2O = 1-O-hexadecyl-sn-glycero-3-phosphocholine + (5Z,8Z,11Z,14Z)-eicosatetraenoate + H(+). The enzyme catalyses 1,2-di-(9Z-octadecenoyl)-sn-glycero-3-phospho-(1'-sn-glycerol) + H2O = 1-(9Z-octadecenoyl)-sn-glycero-3-phospho-(1'-sn-glycerol) + (9Z)-octadecenoate + H(+). It catalyses the reaction 1-octadecanoyl-2-(5Z,8Z,11Z,14Z-eicosatetraenoyl)-sn-glycero-3-phosphate + H2O = 1-octadecanoyl-sn-glycero-3-phosphate + (5Z,8Z,11Z,14Z)-eicosatetraenoate + H(+). It carries out the reaction 1-hexadecanoyl-sn-glycero-3-phosphocholine + H2O = sn-glycerol 3-phosphocholine + hexadecanoate + H(+). The catalysed reaction is 2-(prostaglandin E2)-sn-glycero-3-phosphoethanolamine + H2O = sn-glycero-3-phosphoethanolamine + prostaglandin E2 + H(+). The enzyme catalyses 2-[(15S)-hydroxy-(5Z,8Z,11Z,13E)-eicosatetraenoyl]-sn-glycero-3-phosphocholine + H2O = (15S)-hydroxy-(5Z,8Z,11Z,13E)-eicosatetraenoate + sn-glycerol 3-phosphocholine + H(+). It catalyses the reaction 2-[(15R)-hydroxy-(5Z,8Z,11Z,13E)-eicosatetraenoyl]-sn-glycero-3-phosphocholine + H2O = (15R)-hydroxy-(5Z,8Z,11Z,13E)-eicosatetraenoate + sn-glycerol 3-phosphocholine + H(+). It carries out the reaction 2-(prostaglandin E2)-sn-glycero-3-phosphocholine + H2O = prostaglandin E2 + sn-glycerol 3-phosphocholine + H(+). The catalysed reaction is 2-[(11R)-hydroxy-(5Z,8Z,12E,14Z)-eicosatetraenoyl]-sn-glycero-3-phosphocholine + H2O = (11R)-hydroxy-(5Z,8Z,12E,14Z)-eicosatetraenoate + sn-glycerol 3-phosphocholine + H(+). The enzyme catalyses 1-(5Z,8Z,11Z,14Z-eicosatetraenoyl)-2-O-hexadecyl-sn-glycero-3-phosphocholine + H2O = 2-O-hexadecyl-sn-glycero-3-phosphocholine + (5Z,8Z,11Z,14Z)-eicosatetraenoate + H(+). It catalyses the reaction 1-octadecanoyl-2-(5Z,8Z,11Z,14Z-eicosatetraenoyl)-sn-glycero-3-phosphocholine + glycerol = 1-(5Z,8Z,11Z,14Z-eicosatetraenoyl)-glycerol + 1-octadecanoyl-sn-glycero-3-phosphocholine. It carries out the reaction 1-octadecanoyl-2-(9Z,12Z,15Z-octadecatrienoyl)-sn-glycero-3-phosphocholine + glycerol = 1-(9Z,12Z,15Z-octadecatrienoyl)-glycerol + 1-octadecanoyl-sn-glycero-3-phosphocholine. It participates in lipid metabolism; arachidonate metabolism. Its pathway is membrane lipid metabolism; glycerophospholipid metabolism. The protein operates within lipid metabolism; prostaglandin biosynthesis. It functions in the pathway lipid metabolism; leukotriene B4 biosynthesis. Activated by cytosolic calcium, which is necessary for binding to membrane lipids. Activated by phosphorylation in response to mitogenic stimuli. Its function is as follows. Has primarily calcium-dependent phospholipase and lysophospholipase activities, with a major role in membrane lipid remodeling and biosynthesis of lipid mediators of the inflammatory response. Plays an important role in embryo implantation and parturition through its ability to trigger prostanoid production. Preferentially hydrolyzes the ester bond of the fatty acyl group attached at sn-2 position of phospholipids (phospholipase A2 activity). Selectively hydrolyzes sn-2 arachidonoyl group from membrane phospholipids, providing the precursor for eicosanoid biosynthesis via the cyclooxygenase pathway. In an alternative pathway of eicosanoid biosynthesis, hydrolyzes sn-2 fatty acyl chain of eicosanoid lysophopholipids to release free bioactive eicosanoids. Hydrolyzes the ester bond of the fatty acyl group attached at sn-1 position of phospholipids (phospholipase A1 activity) only if an ether linkage rather than an ester linkage is present at the sn-2 position. This hydrolysis is not stereospecific. Has calcium-independent phospholipase A2 and lysophospholipase activities in the presence of phosphoinositides. Has O-acyltransferase activity. Catalyzes the transfer of fatty acyl chains from phospholipids to a primary hydroxyl group of glycerol (sn-1 or sn-3), potentially contributing to monoacylglycerol synthesis. This chain is Cytosolic phospholipase A2 (Pla2g4a), found in Rattus norvegicus (Rat).